A 293-amino-acid chain; its full sequence is Protease HtpX (293 aa).

The next 2 helical transmembrane spans lie at 4–24 (IALF…VLSL) and 34–54 (GLMI…LLMS). Position 139 (histidine 139) interacts with Zn(2+). Glutamate 140 is an active-site residue. Residue histidine 143 participates in Zn(2+) binding. 2 consecutive transmembrane segments (helical) span residues 158-178 (IVNT…SGFL) and 193-213 (LVYF…ASII). A Zn(2+)-binding site is contributed by glutamate 222.

Belongs to the peptidase M48B family. Zn(2+) is required as a cofactor.

The protein resides in the cell inner membrane. In Pectobacterium carotovorum subsp. carotovorum (strain PC1), this protein is Protease HtpX.